The sequence spans 193 residues: MKKVKKKKSDSRRRRNSISPQTSSDSSQQPSSETPPSCPEPASPPSKPQPCQESTTPHQVNPEPKPQQHTPQPLPPPEKPASSPFLVPMEPKPILPSRKAAVPLTYVAPRSCSCAACPGSSACWHRLGLCHSRIFDVLLPRDWSSMPGRGVPNLLTFYRKPSRKYCAPRNSRASSSRNCCCGSGGLGSCLLHG.

A compositionally biased stretch (basic residues) spans 1–16 (MKKVKKKKSDSRRRRN). The interval 1–92 (MKKVKKKKSD…SPFLVPMEPK (92 aa)) is disordered. A compositionally biased stretch (low complexity) spans 17–35 (SISPQTSSDSSQQPSSETP). Residues 36-48 (PSCPEPASPPSKP) show a composition bias toward pro residues.

In terms of tissue distribution, strongly expressed in testis. Faintly expressed in epididymis, ovary, spleen, kidney, lung, heart, brain, epididymis, liver and skeletal muscle.

It localises to the cell projection. The protein localises to the cilium. The protein resides in the flagellum. The protein is Spermatogenesis-associated protein 3 (Spata3) of Mus musculus (Mouse).